A 258-amino-acid chain; its full sequence is Phosphoadenosine 5'-phosphosulfate reductase (258 aa).

The active-site Nucleophile; cysteine thiosulfonate intermediate is the cysteine 244.

The protein belongs to the PAPS reductase family. CysH subfamily.

The protein resides in the cytoplasm. It carries out the reaction [thioredoxin]-disulfide + sulfite + adenosine 3',5'-bisphosphate + 2 H(+) = [thioredoxin]-dithiol + 3'-phosphoadenylyl sulfate. It functions in the pathway sulfur metabolism; hydrogen sulfide biosynthesis; sulfite from sulfate: step 3/3. In terms of biological role, catalyzes the formation of sulfite from phosphoadenosine 5'-phosphosulfate (PAPS) using thioredoxin as an electron donor. This Vibrio vulnificus (strain CMCP6) protein is Phosphoadenosine 5'-phosphosulfate reductase.